Consider the following 231-residue polypeptide: ATP phosphoribosyltransferase (231 aa).

It belongs to the ATP phosphoribosyltransferase family. Short subfamily. Heteromultimer composed of HisG and HisZ subunits.

It is found in the cytoplasm. The enzyme catalyses 1-(5-phospho-beta-D-ribosyl)-ATP + diphosphate = 5-phospho-alpha-D-ribose 1-diphosphate + ATP. It participates in amino-acid biosynthesis; L-histidine biosynthesis; L-histidine from 5-phospho-alpha-D-ribose 1-diphosphate: step 1/9. Its function is as follows. Catalyzes the condensation of ATP and 5-phosphoribose 1-diphosphate to form N'-(5'-phosphoribosyl)-ATP (PR-ATP). Has a crucial role in the pathway because the rate of histidine biosynthesis seems to be controlled primarily by regulation of HisG enzymatic activity. The sequence is that of ATP phosphoribosyltransferase (hisG) from Sinorhizobium fredii (strain NBRC 101917 / NGR234).